The sequence spans 461 residues: MNTSHKTLKTIAILGQPNVGKSSLFNRLARERIAITSDFAGTTRDINKRKIALNGHEVELLDTGGMAKDALLSKEIKALNLKAAQMSDLILYVVDGKSIPSDEDLKLFREVFKTNPNCFLVINKIDNDKEKERAYAFSSFGMPKSFNISVSHNRGISTLIDAILSALDLNQIIEQDLDADILESLENNAPKEEIKEEEIIQVGIIGRVNVGKSSLLNALTKKERSLVSSVAGTTIDPIDETILIGDQKICFVDTAGIRHRGKILGIEKYALERTQKALEKSHIALLVLDVSAPFVELDEKISSLADKHSLGIILILNKWDIRYAPYEEIMATLKRKFRFLEYAPIITTSCLKTHHIDEIKHKIIEVYECFSKRIPTSLLNSVINQATQKHPLPSDGGKLVKVYYATQFATKPPQISLIMNRPKALHFSYKRYLINTLRKEFNFLGTPLILNAKDKKSAQQN.

2 consecutive EngA-type G domains span residues 9-171 (KTIA…DLNQ) and 200-371 (IQVG…ECFS). GTP-binding positions include 15-22 (GQPNVGKS), 62-66 (DTGGM), 123-126 (NKID), 206-213 (GRVNVGKS), 253-257 (DTAGI), and 317-320 (NKWD). The region spanning 372-456 (KRIPTSLLNS…PLILNAKDKK (85 aa)) is the KH-like domain.

It belongs to the TRAFAC class TrmE-Era-EngA-EngB-Septin-like GTPase superfamily. EngA (Der) GTPase family. As to quaternary structure, associates with the 50S ribosomal subunit.

In terms of biological role, GTPase that plays an essential role in the late steps of ribosome biogenesis. This Helicobacter pylori (strain Shi470) protein is GTPase Der.